Here is a 90-residue protein sequence, read N- to C-terminus: Acylphosphatase (90 aa).

Positions 4–90 constitute an Acylphosphatase-like domain; that stretch reads RWRFLIEGSV…TGNDWFDVRT (87 aa). Active-site residues include Arg-19 and Asn-37.

It belongs to the acylphosphatase family.

The catalysed reaction is an acyl phosphate + H2O = a carboxylate + phosphate + H(+). This Synechococcus sp. (strain CC9311) protein is Acylphosphatase (acyP).